The following is a 188-amino-acid chain: Probable nicotinate-nucleotide adenylyltransferase (188 aa).

The protein belongs to the NadD family.

The enzyme catalyses nicotinate beta-D-ribonucleotide + ATP + H(+) = deamido-NAD(+) + diphosphate. It functions in the pathway cofactor biosynthesis; NAD(+) biosynthesis; deamido-NAD(+) from nicotinate D-ribonucleotide: step 1/1. In terms of biological role, catalyzes the reversible adenylation of nicotinate mononucleotide (NaMN) to nicotinic acid adenine dinucleotide (NaAD). The protein is Probable nicotinate-nucleotide adenylyltransferase of Listeria monocytogenes serotype 4b (strain F2365).